Reading from the N-terminus, the 62-residue chain is Photosystem II reaction center protein Z (62 aa).

2 helical membrane passes run 8–28 (AVFA…VVFA) and 41–61 (FSGT…NSLI).

It belongs to the PsbZ family. In terms of assembly, PSII is composed of 1 copy each of membrane proteins PsbA, PsbB, PsbC, PsbD, PsbE, PsbF, PsbH, PsbI, PsbJ, PsbK, PsbL, PsbM, PsbT, PsbY, PsbZ, Psb30/Ycf12, at least 3 peripheral proteins of the oxygen-evolving complex and a large number of cofactors. It forms dimeric complexes.

The protein resides in the plastid. It is found in the chloroplast thylakoid membrane. May control the interaction of photosystem II (PSII) cores with the light-harvesting antenna, regulates electron flow through the 2 photosystem reaction centers. PSII is a light-driven water plastoquinone oxidoreductase, using light energy to abstract electrons from H(2)O, generating a proton gradient subsequently used for ATP formation. The chain is Photosystem II reaction center protein Z from Liriodendron tulipifera (Tuliptree).